Here is a 91-residue protein sequence, read N- to C-terminus: uncharacterized protein (91 aa).

Residues 12 to 34 (FAIVYANITFLFYYLLDFTLPFH) form a helical membrane-spanning segment.

The protein localises to the membrane. This is an uncharacterized protein from Saccharomyces cerevisiae (strain ATCC 204508 / S288c) (Baker's yeast).